The chain runs to 343 residues: MIKVGIVGGSGYGAIELIRLLQTHPHVTIAHIYSHSKVDEPLKLTFPHLQHIMQHFEALTVDNNDCDVIFFATPAPVSKTCIPPLVEKGIHVIDLSGAFRIKNREIYEAYYKETAAAQDDLNHAIYSISEWQSFDNNGTKLISNPGCFPTATLLALHPLISEKIVDLSSIIIDAKTGVSGAGRSLSQRVHFSEMNENLSAYAIGNHKHKPEIEQYLSIIAGQDVSVIFTPHLVPMTRGILSTIYVKFSSEYTTESLHKLMTSYYANQPFVRIRDIGTFPTTKEVLGSNYCDIGIYVDETTQTAILVSVIDNLVKGASGQAIQNLNILYDFEVTTGLNQSPVYP.

Cys-147 is an active-site residue.

Belongs to the NAGSA dehydrogenase family. Type 1 subfamily.

The protein localises to the cytoplasm. The enzyme catalyses N-acetyl-L-glutamate 5-semialdehyde + phosphate + NADP(+) = N-acetyl-L-glutamyl 5-phosphate + NADPH + H(+). Its pathway is amino-acid biosynthesis; L-arginine biosynthesis; N(2)-acetyl-L-ornithine from L-glutamate: step 3/4. Its function is as follows. Catalyzes the NADPH-dependent reduction of N-acetyl-5-glutamyl phosphate to yield N-acetyl-L-glutamate 5-semialdehyde. This is N-acetyl-gamma-glutamyl-phosphate reductase from Staphylococcus aureus (strain Mu3 / ATCC 700698).